The sequence spans 356 residues: Nicotinate-nucleotide--dimethylbenzimidazole phosphoribosyltransferase (356 aa).

Glutamate 317 (proton acceptor) is an active-site residue.

It belongs to the CobT family. As to quaternary structure, homodimer.

The catalysed reaction is 5,6-dimethylbenzimidazole + nicotinate beta-D-ribonucleotide = alpha-ribazole 5'-phosphate + nicotinate + H(+). Its pathway is nucleoside biosynthesis; alpha-ribazole biosynthesis; alpha-ribazole from 5,6-dimethylbenzimidazole: step 1/2. Catalyzes the synthesis of alpha-ribazole-5'-phosphate from nicotinate mononucleotide (NAMN) and 5,6-dimethylbenzimidazole (DMB). In Salmonella dublin (strain CT_02021853), this protein is Nicotinate-nucleotide--dimethylbenzimidazole phosphoribosyltransferase.